The sequence spans 570 residues: Proline--tRNA ligase (570 aa).

Belongs to the class-II aminoacyl-tRNA synthetase family. ProS type 1 subfamily. In terms of assembly, homodimer.

The protein localises to the cytoplasm. It catalyses the reaction tRNA(Pro) + L-proline + ATP = L-prolyl-tRNA(Pro) + AMP + diphosphate. In terms of biological role, catalyzes the attachment of proline to tRNA(Pro) in a two-step reaction: proline is first activated by ATP to form Pro-AMP and then transferred to the acceptor end of tRNA(Pro). As ProRS can inadvertently accommodate and process non-cognate amino acids such as alanine and cysteine, to avoid such errors it has two additional distinct editing activities against alanine. One activity is designated as 'pretransfer' editing and involves the tRNA(Pro)-independent hydrolysis of activated Ala-AMP. The other activity is designated 'posttransfer' editing and involves deacylation of mischarged Ala-tRNA(Pro). The misacylated Cys-tRNA(Pro) is not edited by ProRS. This Shewanella sp. (strain MR-4) protein is Proline--tRNA ligase.